Reading from the N-terminus, the 373-residue chain is tRNA-specific 2-thiouridylase MnmA (373 aa).

ATP contacts are provided by residues 18-25 (AMSGGVDS) and L44. The active-site Nucleophile is the C117. C117 and C214 are oxidised to a cystine. An ATP-binding site is contributed by G141. An interaction with tRNA region spans residues 163–165 (RDQ). Catalysis depends on C214, which acts as the Cysteine persulfide intermediate.

The protein belongs to the MnmA/TRMU family.

It localises to the cytoplasm. The enzyme catalyses S-sulfanyl-L-cysteinyl-[protein] + uridine(34) in tRNA + AH2 + ATP = 2-thiouridine(34) in tRNA + L-cysteinyl-[protein] + A + AMP + diphosphate + H(+). In terms of biological role, catalyzes the 2-thiolation of uridine at the wobble position (U34) of tRNA, leading to the formation of s(2)U34. In Paramagnetospirillum magneticum (strain ATCC 700264 / AMB-1) (Magnetospirillum magneticum), this protein is tRNA-specific 2-thiouridylase MnmA.